Reading from the N-terminus, the 609-residue chain is Isopenicillin N epimerase component 1 (609 aa).

185–196 provides a ligand contact to AMP; it reads MLSGSGTTGLPK. Residues 545-570 are disordered; sequence STDNHKHNKVPLRDEGVDPRSMGSKV.

It belongs to the ATP-dependent AMP-binding enzyme family.

It catalyses the reaction isopenicillin N = penicillin N. It functions in the pathway antibiotic biosynthesis; cephalosporin C biosynthesis. In terms of biological role, together with cefD2, catalyzes the reversible isomerization between isopenicillin N and penicillin N. This two-component IPN epimerase system may function by two sequential steps, an activation of isopenicillin N by the acyl-CoA synthase component cefD1, followed by epimerization by the acyl-CoA racemase component cefD2. The polypeptide is Isopenicillin N epimerase component 1 (cefD1) (Hapsidospora chrysogena (Acremonium chrysogenum)).